We begin with the raw amino-acid sequence, 259 residues long: Leucyl/phenylalanyl-tRNA--protein transferase (259 aa).

It belongs to the L/F-transferase family.

It localises to the cytoplasm. The enzyme catalyses N-terminal L-lysyl-[protein] + L-leucyl-tRNA(Leu) = N-terminal L-leucyl-L-lysyl-[protein] + tRNA(Leu) + H(+). It catalyses the reaction N-terminal L-arginyl-[protein] + L-leucyl-tRNA(Leu) = N-terminal L-leucyl-L-arginyl-[protein] + tRNA(Leu) + H(+). It carries out the reaction L-phenylalanyl-tRNA(Phe) + an N-terminal L-alpha-aminoacyl-[protein] = an N-terminal L-phenylalanyl-L-alpha-aminoacyl-[protein] + tRNA(Phe). Functionally, functions in the N-end rule pathway of protein degradation where it conjugates Leu, Phe and, less efficiently, Met from aminoacyl-tRNAs to the N-termini of proteins containing an N-terminal arginine or lysine. This Teredinibacter turnerae (strain ATCC 39867 / T7901) protein is Leucyl/phenylalanyl-tRNA--protein transferase.